A 433-amino-acid chain; its full sequence is 28S rRNA (cytosine-C(5))-methyltransferase (433 aa).

S-adenosyl-L-methionine is bound by residues 235-241 (CAAPGMK), E259, D286, and D304. C357 serves as the catalytic Nucleophile.

This sequence belongs to the class I-like SAM-binding methyltransferase superfamily. RsmB/NOP family.

It catalyses the reaction a cytidine in 28S rRNA + S-adenosyl-L-methionine = a 5-methylcytidine in 28S rRNA + S-adenosyl-L-homocysteine + H(+). Its function is as follows. S-adenosyl-L-methionine-dependent methyltransferase that specifically methylates the C(5) position of a cytosine in 28S rRNA. In Drosophila melanogaster (Fruit fly), this protein is 28S rRNA (cytosine-C(5))-methyltransferase.